The sequence spans 130 residues: Holo-[acyl-carrier-protein] synthase (130 aa).

2 residues coordinate Mg(2+): Asp9 and Glu58.

The protein belongs to the P-Pant transferase superfamily. AcpS family. Requires Mg(2+) as cofactor.

It localises to the cytoplasm. The catalysed reaction is apo-[ACP] + CoA = holo-[ACP] + adenosine 3',5'-bisphosphate + H(+). Transfers the 4'-phosphopantetheine moiety from coenzyme A to a Ser of acyl-carrier-protein. The chain is Holo-[acyl-carrier-protein] synthase from Mycobacterium marinum (strain ATCC BAA-535 / M).